Consider the following 389-residue polypeptide: Acetyl-CoA:oxalate CoA-transferase (389 aa).

Residue histidine 237 is part of the active site.

In terms of assembly, homodimer.

It carries out the reaction oxalate + acetyl-CoA = oxalyl-CoA + acetate. Involved in the catabolism of oxalate and in the adapatation to low pH. ACOCT serves to prime the oxalate-induced acid tolerance response (ATR) cycle by producing substrate for oxalyl-CoA decarboxylase (OXC) and formyl-coenzyme A transferase (FCOCT). Catalyzes the reversible conversion of acetyl-CoA and oxalate to oxalyl-CoA and acetate. It can also use formyl-CoA and oxalate to produce oxalyl-CoA and formate with significantly reduced specific activity. The protein is Acetyl-CoA:oxalate CoA-transferase (uctC) of Acetobacter aceti.